A 292-amino-acid polypeptide reads, in one-letter code: Histamine N-methyltransferase (292 aa).

Glu-28 is a binding site for substrate. Positions 60, 89, 94, 120, and 142 each coordinate S-adenosyl-L-methionine. Asn-283 contacts substrate.

It belongs to the class I-like SAM-binding methyltransferase superfamily. HNMT family. In terms of assembly, monomer.

Its subcellular location is the cytoplasm. The enzyme catalyses histamine + S-adenosyl-L-methionine = N(tau)-methylhistamine + S-adenosyl-L-homocysteine + H(+). In terms of biological role, inactivates histamine by N-methylation. Plays an important role in degrading histamine and in regulating the airway response to histamine. The polypeptide is Histamine N-methyltransferase (HNMT) (Homo sapiens (Human)).